A 139-amino-acid chain; its full sequence is Large ribosomal subunit protein uL13 (139 aa).

The protein belongs to the universal ribosomal protein uL13 family. Part of the 50S ribosomal subunit.

This protein is one of the early assembly proteins of the 50S ribosomal subunit, although it is not seen to bind rRNA by itself. It is important during the early stages of 50S assembly. The chain is Large ribosomal subunit protein uL13 from Methanococcoides burtonii (strain DSM 6242 / NBRC 107633 / OCM 468 / ACE-M).